The sequence spans 262 residues: Ferric siderophore reductase (262 aa).

The [2Fe-2S] cluster site is built by Cys-244, Cys-245, Cys-256, and Cys-259.

In terms of assembly, monomer. [2Fe-2S] cluster is required as a cofactor.

It localises to the cytoplasm. Its subcellular location is the cell inner membrane. Displays pH dependent redox properties. SufD is necessary for the stability of FhuF. Its function is as follows. Siderophore-iron reductase which is involved in iron removal from the hydroxamate-type siderophores coprogen, ferrichrome and ferrioxamine B after their transport into the cell. Binds both the iron-loaded and the apo forms of ferrichrome. The polypeptide is Ferric siderophore reductase (fhuF) (Escherichia coli (strain K12)).